The primary structure comprises 127 residues: Large ribosomal subunit protein bL17 (127 aa).

Belongs to the bacterial ribosomal protein bL17 family. In terms of assembly, part of the 50S ribosomal subunit. Contacts protein L32.

The sequence is that of Large ribosomal subunit protein bL17 from Xanthomonas euvesicatoria pv. vesicatoria (strain 85-10) (Xanthomonas campestris pv. vesicatoria).